Here is a 431-residue protein sequence, read N- to C-terminus: Histidine--tRNA ligase (431 aa).

Belongs to the class-II aminoacyl-tRNA synthetase family. In terms of assembly, homodimer.

The protein resides in the cytoplasm. It carries out the reaction tRNA(His) + L-histidine + ATP = L-histidyl-tRNA(His) + AMP + diphosphate + H(+). The protein is Histidine--tRNA ligase of Neisseria meningitidis serogroup C (strain 053442).